Here is a 744-residue protein sequence, read N- to C-terminus: Probable methylmalonyl-CoA mutase, mitochondrial (744 aa).

Positions 605 to 737 (QPRIMVAKMG…EKLEANLPEA (133 aa)) constitute a B12-binding domain. His618 serves as a coordination point for adenosylcob(III)alamin.

This sequence belongs to the methylmalonyl-CoA mutase family. Homodimer. Adenosylcob(III)alamin is required as a cofactor.

Its subcellular location is the mitochondrion matrix. The enzyme catalyses (R)-methylmalonyl-CoA = succinyl-CoA. Functionally, involved, in man, in the degradation of several amino acids, odd-chain fatty acids and cholesterol via propionyl-CoA to the tricarboxylic acid cycle. MCM has different functions in other species. In Caenorhabditis elegans, this protein is Probable methylmalonyl-CoA mutase, mitochondrial (mmcm-1).